The chain runs to 394 residues: Formate-dependent phosphoribosylglycinamide formyltransferase (394 aa).

Residues 22–23 (EL) and E82 each bind N(1)-(5-phospho-beta-D-ribosyl)glycinamide. ATP-binding positions include R114, K155, 160-165 (SSGKGQ), 195-198 (EGFV), and E203. Residues 119–308 (RLAAETLKLP…EFALHVRAIL (190 aa)) enclose the ATP-grasp domain. Positions 267 and 279 each coordinate Mg(2+). Residues D286, K357, and 364–365 (RR) contribute to the N(1)-(5-phospho-beta-D-ribosyl)glycinamide site.

The protein belongs to the PurK/PurT family. In terms of assembly, homodimer.

The enzyme catalyses N(1)-(5-phospho-beta-D-ribosyl)glycinamide + formate + ATP = N(2)-formyl-N(1)-(5-phospho-beta-D-ribosyl)glycinamide + ADP + phosphate + H(+). The protein operates within purine metabolism; IMP biosynthesis via de novo pathway; N(2)-formyl-N(1)-(5-phospho-D-ribosyl)glycinamide from N(1)-(5-phospho-D-ribosyl)glycinamide (formate route): step 1/1. Functionally, involved in the de novo purine biosynthesis. Catalyzes the transfer of formate to 5-phospho-ribosyl-glycinamide (GAR), producing 5-phospho-ribosyl-N-formylglycinamide (FGAR). Formate is provided by PurU via hydrolysis of 10-formyl-tetrahydrofolate. The polypeptide is Formate-dependent phosphoribosylglycinamide formyltransferase (Tolumonas auensis (strain DSM 9187 / NBRC 110442 / TA 4)).